A 480-amino-acid chain; its full sequence is MNTHPQTSPNTHYKIADISLADWGRKEIDIAEHEMPGLMSIRRKYASKQPLKGVRVTGSLHMTIQTAVLIETLKDIGANVRWASCNIFSTQDHAAAAIATSGTPVFAWKGETLEEYWDCTLQALTFTLADGTLTGPELIVDDGGDATLLIHKGYELENGSTWVDEPSDSLEEQVIKRLLKRIAIERPGYWTRVVNDWKGVSEETTTGVHRLYQIAATGRLLVPAINVNDSVTKSKFDNLYGCRESLADGLKRAMDVMLAGKLAVVCGYGDVGKGSAHSLRAYGARVIVTEIDPICALQAAMEGFEVRTVEDTLGQADIYVTTTGNKDVIRIEHMTAMKDQVIVCNIGHFDNEIQVDALNTLTGVQKINIKPQVDKFILPNGNTLFLLAEGRLVNLGCATGHPSFVMSNSFANQTLAQIDLWQNKDVYEKNVYRLPKKLDEEVARLHLEKIGVKLTTLTANQAAYLGISVEGPFKPEHYRY.

Substrate is bound by residues Thr-63, Asp-142, and Glu-203. Position 204-206 (204-206 (TTT)) interacts with NAD(+). Substrate is bound by residues Lys-233 and Asp-237. NAD(+) contacts are provided by residues Asn-238, 267–272 (GYGDVG), Glu-290, Asn-325, 346–348 (IGH), and Asn-394.

The protein belongs to the adenosylhomocysteinase family. NAD(+) serves as cofactor.

It localises to the cytoplasm. The catalysed reaction is S-adenosyl-L-homocysteine + H2O = L-homocysteine + adenosine. The protein operates within amino-acid biosynthesis; L-homocysteine biosynthesis; L-homocysteine from S-adenosyl-L-homocysteine: step 1/1. Its function is as follows. May play a key role in the regulation of the intracellular concentration of adenosylhomocysteine. This chain is Adenosylhomocysteinase, found in Xylella fastidiosa (strain M12).